A 333-amino-acid polypeptide reads, in one-letter code: Testin-2 (333 aa).

Positions Met-1–Thr-17 are cleaved as a signal peptide. Intrachain disulfides connect Cys-135-Cys-178, Cys-169-Cys-211, and Cys-269-Cys-322. Residue Asn-173 is glycosylated (N-linked (GlcNAc...) asparagine). Residues His-276 and Asn-300 contribute to the active site.

It belongs to the peptidase C1 family. In terms of tissue distribution, expressed in testis and ovary. Low level in spleen, epididymis, kidney, and uterus. Expressed in primary cultures of Sertoli cells.

It is found in the secreted. This Mus musculus (Mouse) protein is Testin-2.